Reading from the N-terminus, the 678-residue chain is RxLR effector protein PITG_16705 (678 aa).

The N-terminal stretch at 1–20 (MHLFFLTAVAFVITSVSVDA) is a signal peptide. The short motif at 46–61 (RLLRKNSTVDLVGEER) is the RxLR-dEER element.

Belongs to the RxLR effector family.

It is found in the secreted. The protein localises to the host cytoplasm. Functionally, effector that enhances P.infestans colonization of Nicotiana benthamiana leaves. The sequence is that of RxLR effector protein PITG_16705 from Phytophthora infestans (strain T30-4) (Potato late blight agent).